Consider the following 248-residue polypeptide: Probable capsular polysaccharide biosynthesis protein YwqC (248 aa).

A run of 2 helical transmembrane segments spans residues 18-38 and 174-194; these read ILLI…ISFF and LLNI…LAFL.

The protein belongs to the CpsC/CapA family. Not phosphorylated in vitro by YwqD.

The protein resides in the cell membrane. The protein operates within capsule biogenesis; capsule polysaccharide biosynthesis. In terms of biological role, required for YwqD kinase activity. May bring YwqD and its substrates into contact. Probably involved in the regulation of capsular polysaccharide biosynthesis. The sequence is that of Probable capsular polysaccharide biosynthesis protein YwqC (ywqC) from Bacillus subtilis (strain 168).